We begin with the raw amino-acid sequence, 423 residues long: Kynureninase (423 aa).

Pyridoxal 5'-phosphate is bound by residues Leu105, Ser106, Phe133–Asp136, Asp218, His221, and Tyr243. An N6-(pyridoxal phosphate)lysine modification is found at Lys244. Trp273 and Asn301 together coordinate pyridoxal 5'-phosphate.

This sequence belongs to the kynureninase family. As to quaternary structure, homodimer. Requires pyridoxal 5'-phosphate as cofactor.

The catalysed reaction is L-kynurenine + H2O = anthranilate + L-alanine + H(+). The enzyme catalyses 3-hydroxy-L-kynurenine + H2O = 3-hydroxyanthranilate + L-alanine + H(+). Its pathway is amino-acid degradation; L-kynurenine degradation; L-alanine and anthranilate from L-kynurenine: step 1/1. The protein operates within cofactor biosynthesis; NAD(+) biosynthesis; quinolinate from L-kynurenine: step 2/3. Its function is as follows. Catalyzes the cleavage of L-kynurenine (L-Kyn) and L-3-hydroxykynurenine (L-3OHKyn) into anthranilic acid (AA) and 3-hydroxyanthranilic acid (3-OHAA), respectively. This chain is Kynureninase, found in Xanthomonas euvesicatoria pv. vesicatoria (strain 85-10) (Xanthomonas campestris pv. vesicatoria).